The sequence spans 121 residues: MELPQNVQHQLAQFQQLQQQAQAISVQKQTVEMQINETQKALEELSRAADDAEVYKSSGNILIRVAKDELTEELQEKLETLQLREKTIERQEERVMKKLQEMQVNIQEAMKGAGINPGMGN.

It belongs to the prefoldin subunit beta family. In terms of assembly, heterohexamer of two alpha and four beta subunits.

It localises to the cytoplasm. Its function is as follows. Molecular chaperone capable of stabilizing a range of proteins. Seems to fulfill an ATP-independent, HSP70-like function in archaeal de novo protein folding. This Methanothermobacter thermautotrophicus (strain ATCC 29096 / DSM 1053 / JCM 10044 / NBRC 100330 / Delta H) (Methanobacterium thermoautotrophicum) protein is Prefoldin subunit beta (pfdB).